Here is a 317-residue protein sequence, read N- to C-terminus: Ricin B-like lectin EULS3 (317 aa).

The span at 1 to 11 (MEHHHQHHRHH) shows a compositional bias: basic residues. Residues 1-157 (MEHHHQHHRH…YHKPDENRLP (157 aa)) are disordered. Positions 25–36 (VPPPHVDAPPQP) are enriched in pro residues. Residues 136–146 (HSSNQPQSSSG) show a composition bias toward polar residues. A Ricin B-type lectin domain is found at 168 to 315 (TVKVYSKAEP…KGDNQLWKIF (148 aa)).

Interacts (via N-terminus) with ATS3A and ATS3B. Expressed in roots, rosette leaves, stems, cauline leaves and flowers.

Its subcellular location is the nucleus. The protein localises to the cytoplasm. Its function is as follows. Lectin which binds carbohydrates in vitro. Interacts through its lectin domain with glycan structures containing one or more Lewis X, Lewis Y or lactosamine motifs. May play a role in abiotic stress responses. May play a role in abscisic acid-induced stomatal closure. May play a role in disease resistance against Pseudomonas syringae through its involvement in stomatal movement. This is Ricin B-like lectin EULS3 from Arabidopsis thaliana (Mouse-ear cress).